Consider the following 449-residue polypeptide: Phosphoglucosamine mutase (449 aa).

S102 (phosphoserine intermediate) is an active-site residue. The Mg(2+) site is built by S102, D241, D243, and D245. The residue at position 102 (S102) is a Phosphoserine.

Belongs to the phosphohexose mutase family. Mg(2+) is required as a cofactor. Post-translationally, activated by phosphorylation.

It carries out the reaction alpha-D-glucosamine 1-phosphate = D-glucosamine 6-phosphate. Its function is as follows. Catalyzes the conversion of glucosamine-6-phosphate to glucosamine-1-phosphate. This chain is Phosphoglucosamine mutase, found in Roseobacter denitrificans (strain ATCC 33942 / OCh 114) (Erythrobacter sp. (strain OCh 114)).